A 443-amino-acid chain; its full sequence is Threonine/serine transporter TdcC (443 aa).

The next 11 helical transmembrane spans lie at 22-42 (TTWTLGLFGTAIGAGVLFFPI), 44-64 (AGFGGLIPILLMLVLAYPIAF), 97-117 (GVVITFLYFFAICPLLWIYGV), 140-160 (FVALFLLLLMAFVIWFGKDLM), 163-183 (VMSYLVWPFIASLVLISLSLI), 207-227 (ILITVWLGISIMVFSFNFSPI), 261-281 (MLMVAVVMFFAFSCLFTLSPA), 311-331 (FAITLEYAASIIALVAIFKSF), 366-386 (ISMIFIMGSTWVVAYANPNIL), 389-409 (IEAMGAPIIASLLCLLPMYAI), and 423-443 (DNVFVTVIGLLTILNIVYKLF).

Belongs to the amino acid/polyamine transporter 2 family. SdaC/TdcC subfamily.

The protein resides in the cell inner membrane. The catalysed reaction is L-threonine(in) + H(+)(in) = L-threonine(out) + H(+)(out). It catalyses the reaction L-serine(in) + H(+)(in) = L-serine(out) + H(+)(out). In terms of biological role, involved in the import of threonine and serine into the cell, with the concomitant import of a proton (symport system). The protein is Threonine/serine transporter TdcC of Shigella boydii serotype 18 (strain CDC 3083-94 / BS512).